Reading from the N-terminus, the 147-residue chain is Large ribosomal subunit protein bL9 (147 aa).

Belongs to the bacterial ribosomal protein bL9 family.

Its function is as follows. Binds to the 23S rRNA. In Myxococcus xanthus (strain DK1622), this protein is Large ribosomal subunit protein bL9.